Reading from the N-terminus, the 429-residue chain is Ribosomal protein uS12 methylthiotransferase RimO (429 aa).

Residues histidine 2–arginine 118 enclose the MTTase N-terminal domain. Positions 11, 47, 81, 142, 146, and 149 each coordinate [4Fe-4S] cluster. The Radical SAM core domain maps to leucine 128–glutamate 357. A TRAM domain is found at arginine 360–glycine 427.

This sequence belongs to the methylthiotransferase family. RimO subfamily. It depends on [4Fe-4S] cluster as a cofactor.

It is found in the cytoplasm. The enzyme catalyses L-aspartate(89)-[ribosomal protein uS12]-hydrogen + (sulfur carrier)-SH + AH2 + 2 S-adenosyl-L-methionine = 3-methylsulfanyl-L-aspartate(89)-[ribosomal protein uS12]-hydrogen + (sulfur carrier)-H + 5'-deoxyadenosine + L-methionine + A + S-adenosyl-L-homocysteine + 2 H(+). Catalyzes the methylthiolation of an aspartic acid residue of ribosomal protein uS12. In Chlorobium limicola (strain DSM 245 / NBRC 103803 / 6330), this protein is Ribosomal protein uS12 methylthiotransferase RimO.